A 237-amino-acid polypeptide reads, in one-letter code: Chaplin-B (237 aa).

The N-terminal stretch at 1-26 (MRRVTRNGVLAVAASGALAVTMPAYA) is a signal peptide. In terms of domain architecture, Chaplin 1 spans 42–82 (SPGLISGNTVQLPVDVPVDVCGNTVNVVGLLNPAAGNGCAD). Disordered stretches follow at residues 81–127 (ADSG…LSGN) and 148–216 (GIGN…TLAG). A compositionally biased stretch (low complexity) spans 101 to 115 (GSATEATSGGAAAEG). The 41-residue stretch at 120 to 160 (SPGVLSGNGVQLPVHLPVNVSGNSVNVVGIGNPAVGNESTN) folds into the Chaplin 2 domain. Positions 169 to 178 (VRPPAEPEPS) are enriched in pro residues. The LPXTG sorting signal motif lies at 202 to 206 (LAHTG). At T205 the chain carries Pentaglycyl murein peptidoglycan amidated threonine. Residues 206–237 (GTDRTLPTLAGGAALVLGGTVLYRRFRPGSGD) constitute a propeptide, removed by sortase.

The protein belongs to the chaplin family. Long chaplin subfamily.

The protein resides in the secreted. The protein localises to the cell wall. One of 8 partially redundant surface-active proteins required for efficient formation of aerial mycelium; the short chaplins assemble into a hydrophobic, amyloidal fibrillar surface layer that envelopes and protects aerial hyphae and spores, presumably anchored to the long chaplins. Chaplins have an overlapping function with the surface-active SapB peptide; chaplins are essential on minimal medium while on rich medium both chaplins and SapB are required for efficient aerial hyphae formation. The long chaplins (ChpA, ChpB, ChpC) are not absolutely necessary for short chaplin localization or rodlet formation, but probably play a role in initiating aerial hyphae development. Chaplins are also involved in cell attachment to a hydrophobic surface. The sequence is that of Chaplin-B from Streptomyces coelicolor (strain ATCC BAA-471 / A3(2) / M145).